A 348-amino-acid chain; its full sequence is Isopentenyl-diphosphate delta-isomerase (348 aa).

11–12 (RK) contacts substrate. FMN is bound by residues 70–72 (AMT), Ser-100, and Asn-131. Residue 100 to 102 (SQR) coordinates substrate. A substrate-binding site is contributed by Gln-165. Glu-166 provides a ligand contact to Mg(2+). Residues Lys-197, Thr-231, 278-280 (GIR), and 299-300 (AR) contribute to the FMN site.

The protein belongs to the IPP isomerase type 2 family. Homooctamer. Dimer of tetramers. Requires FMN as cofactor. NADPH is required as a cofactor. It depends on Mg(2+) as a cofactor.

Its subcellular location is the cytoplasm. The enzyme catalyses isopentenyl diphosphate = dimethylallyl diphosphate. Involved in the biosynthesis of isoprenoids. Catalyzes the 1,3-allylic rearrangement of the homoallylic substrate isopentenyl (IPP) to its allylic isomer, dimethylallyl diphosphate (DMAPP). This chain is Isopentenyl-diphosphate delta-isomerase, found in Mycobacterium marinum (strain ATCC BAA-535 / M).